A 145-amino-acid chain; its full sequence is Copper transporter 4 (145 aa).

Helical transmembrane passes span 53–73 (GMYALALIFVFFLAFLAEWLA) and 106–126 (YLVILAVVSFNGGVFLAAIFG).

Belongs to the copper transporter (Ctr) (TC 1.A.56) family. SLC31A subfamily. Highly expressed in roots and at lower levels in leaves, stems and flowers.

It localises to the membrane. Its function is as follows. Involved in the transport of copper. In Arabidopsis thaliana (Mouse-ear cress), this protein is Copper transporter 4 (COPT4).